Consider the following 209-residue polypeptide: A-type ATP synthase subunit D (209 aa).

It belongs to the V-ATPase D subunit family. As to quaternary structure, has multiple subunits with at least A(3), B(3), C, D, E, F, H, I and proteolipid K(x).

The protein localises to the cell membrane. In terms of biological role, component of the A-type ATP synthase that produces ATP from ADP in the presence of a proton gradient across the membrane. The protein is A-type ATP synthase subunit D of Sulfolobus acidocaldarius (strain ATCC 33909 / DSM 639 / JCM 8929 / NBRC 15157 / NCIMB 11770).